Consider the following 363-residue polypeptide: Adenosine deaminase (363 aa).

His42 and His44 together coordinate Zn(2+). A purine D-ribonucleoside contacts are provided by residues 44 to 46 (HLD), Asp172, and Gly201. Residues 170–184 (IGDTGHEAANIKASA) form a gating helix loop; regulates binding affinity for substrates and thus substrate selectivity region. Residue His226 participates in Zn(2+) binding. 3 residues coordinate a purine D-ribonucleoside: Glu229, His253, and Asp310. Asp310 contacts Zn(2+).

Belongs to the metallo-dependent hydrolases superfamily. Adenosine and AMP deaminases family. Zn(2+) serves as cofactor.

The catalysed reaction is adenosine + H2O + H(+) = inosine + NH4(+). It catalyses the reaction S-methyl-5'-thioadenosine + H2O + H(+) = S-methyl-5'-thioinosine + NH4(+). The protein operates within purine metabolism; purine nucleoside salvage. Its activity is regulated as follows. Inhibited by coformycin and methylthiocoformycin (MT-coformycin). In terms of biological role, catalyzes the hydrolytic deamination of adenosine to produce inosine. Unlike mammalian adenosine deaminases, also catalyzes the deamination of 5'-methylthioadenosine (MTA), a by-product of polyamine biosynthesis, to produce 5'-methylthioinosine (MTI). Plays an essential role in the purine salvage pathway which allows the parasite to use host cell purines for the synthesis of nucleic acids. The protein is Adenosine deaminase of Plasmodium vivax (strain Salvador I).